A 142-amino-acid chain; its full sequence is Large ribosomal subunit protein uL11 (142 aa).

Belongs to the universal ribosomal protein uL11 family. As to quaternary structure, part of the ribosomal stalk of the 50S ribosomal subunit. Interacts with L10 and the large rRNA to form the base of the stalk. L10 forms an elongated spine to which L12 dimers bind in a sequential fashion forming a multimeric L10(L12)X complex. In terms of processing, one or more lysine residues are methylated.

Its function is as follows. Forms part of the ribosomal stalk which helps the ribosome interact with GTP-bound translation factors. This chain is Large ribosomal subunit protein uL11, found in Mycoplasma capricolum subsp. capricolum (strain California kid / ATCC 27343 / NCTC 10154).